Consider the following 345-residue polypeptide: Tyrosine--tRNA ligase (345 aa).

Y36 is a binding site for L-tyrosine. Positions P41 to H49 match the 'HIGH' region motif. L-tyrosine is bound by residues Y163, Q167, D170, and Q185.

It belongs to the class-I aminoacyl-tRNA synthetase family. TyrS type 3 subfamily. Homodimer.

The protein localises to the cytoplasm. The enzyme catalyses tRNA(Tyr) + L-tyrosine + ATP = L-tyrosyl-tRNA(Tyr) + AMP + diphosphate + H(+). Its function is as follows. Catalyzes the attachment of tyrosine to tRNA(Tyr) in a two-step reaction: tyrosine is first activated by ATP to form Tyr-AMP and then transferred to the acceptor end of tRNA(Tyr). The protein is Tyrosine--tRNA ligase of Natronomonas pharaonis (strain ATCC 35678 / DSM 2160 / CIP 103997 / JCM 8858 / NBRC 14720 / NCIMB 2260 / Gabara) (Halobacterium pharaonis).